We begin with the raw amino-acid sequence, 194 residues long: Adenylate kinase isoenzyme 1 (194 aa).

An N-acetylmethionine modification is found at methionine 1. 18–23 (GSGKGT) contacts ATP. Serine 38 bears the Phosphoserine mark. The interval 38–67 (STGDLLRAEVSSGSSRGKMLSSIMEKGELV) is NMP. AMP contacts are provided by residues threonine 39, arginine 44, 65–67 (ELV), 94–97 (GYPR), and glutamine 101. Residues 131–141 (KRGETSGRVDD) form an LID region. Position 132 (arginine 132) interacts with ATP. AMP is bound by residues arginine 138 and arginine 149. Position 177 (glycine 177) interacts with ATP.

Belongs to the adenylate kinase family. AK1 subfamily. As to quaternary structure, monomer. Mg(2+) is required as a cofactor.

Its subcellular location is the cytoplasm. The catalysed reaction is a ribonucleoside 5'-phosphate + ATP = a ribonucleoside 5'-diphosphate + ADP. It carries out the reaction AMP + ATP = 2 ADP. It catalyses the reaction dAMP + ATP = dADP + ADP. The enzyme catalyses dATP + AMP = dADP + ADP. The catalysed reaction is dAMP + dATP = 2 dADP. It carries out the reaction a 2'-deoxyribonucleoside 5'-diphosphate + ATP = a 2'-deoxyribonucleoside 5'-triphosphate + ADP. It catalyses the reaction a ribonucleoside 5'-diphosphate + ATP = a ribonucleoside 5'-triphosphate + ADP. The enzyme catalyses CDP + GTP = CTP + GDP. The catalysed reaction is GDP + ATP = GTP + ADP. It carries out the reaction UDP + ATP = UTP + ADP. It catalyses the reaction GTP + UDP = UTP + GDP. The enzyme catalyses dTDP + GTP = dTTP + GDP. The catalysed reaction is dCDP + GTP = dCTP + GDP. It carries out the reaction dGDP + ATP = dGTP + ADP. It catalyses the reaction dADP + GTP = dATP + GDP. The enzyme catalyses thiamine diphosphate + ADP = thiamine triphosphate + AMP. Functionally, catalyzes the reversible transfer of the terminal phosphate group between ATP and AMP. Also displays broad nucleoside diphosphate kinase activity. Plays an important role in cellular energy homeostasis and in adenine nucleotide metabolism. Also catalyzes at a very low rate the synthesis of thiamine triphosphate (ThTP) from thiamine diphosphate (ThDP) and ADP. The sequence is that of Adenylate kinase isoenzyme 1 (Ak1) from Rattus norvegicus (Rat).